The chain runs to 217 residues: Pyrophosphatase PpaX (217 aa).

Aspartate 11 functions as the Nucleophile in the catalytic mechanism.

Belongs to the HAD-like hydrolase superfamily. PpaX family. Requires Mg(2+) as cofactor.

It catalyses the reaction diphosphate + H2O = 2 phosphate + H(+). Functionally, hydrolyzes pyrophosphate formed during P-Ser-HPr dephosphorylation by HPrK/P. Might play a role in controlling the intracellular pyrophosphate pool. This Listeria monocytogenes serotype 4a (strain HCC23) protein is Pyrophosphatase PpaX.